Reading from the N-terminus, the 132-residue chain is Small ribosomal subunit protein uS8 (132 aa).

It belongs to the universal ribosomal protein uS8 family. As to quaternary structure, part of the 30S ribosomal subunit. Contacts proteins S5 and S12.

In terms of biological role, one of the primary rRNA binding proteins, it binds directly to 16S rRNA central domain where it helps coordinate assembly of the platform of the 30S subunit. This Flavobacterium johnsoniae (strain ATCC 17061 / DSM 2064 / JCM 8514 / BCRC 14874 / CCUG 350202 / NBRC 14942 / NCIMB 11054 / UW101) (Cytophaga johnsonae) protein is Small ribosomal subunit protein uS8.